Consider the following 363-residue polypeptide: Peptide chain release factor 2 (363 aa).

An N5-methylglutamine modification is found at Gln-251.

Belongs to the prokaryotic/mitochondrial release factor family. Post-translationally, methylated by PrmC. Methylation increases the termination efficiency of RF2.

It is found in the cytoplasm. Functionally, peptide chain release factor 2 directs the termination of translation in response to the peptide chain termination codons UGA and UAA. The protein is Peptide chain release factor 2 of Helicobacter acinonychis (strain Sheeba).